The primary structure comprises 647 residues: Putative lipase atg15 (647 aa).

At 1–18 (MLPSGKRKADAFSCTSAA) the chain is on the cytoplasmic side. The helical; Signal-anchor for type II membrane protein transmembrane segment at 19-39 (RVTAKLALSFLALSTTPLVNA) threads the bilayer. Topologically, residues 40–647 (FSYEEPNAQI…EGGEGPVNDL (608 aa)) are lumenal. N203, N225, N283, and N307 each carry an N-linked (GlcNAc...) asparagine glycan. S323 (charge relay system) is an active-site residue. N469 carries N-linked (GlcNAc...) asparagine glycosylation. Positions 597–626 (APALPSSVLTPSATATPPEGQPDDSGKRCR) are disordered.

It belongs to the AB hydrolase superfamily. Lipase family. In terms of assembly, binds to both phosphatidylinositol (PI) and phosphatidylinositol 3,5-bisphosphate (PIP2).

The protein resides in the endosome. The protein localises to the multivesicular body membrane. It is found in the prevacuolar compartment membrane. The enzyme catalyses a triacylglycerol + H2O = a diacylglycerol + a fatty acid + H(+). Its function is as follows. Lipase which is essential for lysis of subvacuolar cytoplasm to vacuole targeted bodies and intravacuolar autophagic bodies. Involved in the lysis of intravacuolar multivesicular body (MVB) vesicles. The intravacuolar membrane disintegration by atg15 is critical to life span extension. This Neurospora crassa (strain ATCC 24698 / 74-OR23-1A / CBS 708.71 / DSM 1257 / FGSC 987) protein is Putative lipase atg15 (atg15).